Reading from the N-terminus, the 292-residue chain is Phosphatidylglycerol--prolipoprotein diacylglyceryl transferase (292 aa).

A run of 4 helical transmembrane segments spans residues 24 to 44 (ISVH…LLIA), 65 to 85 (FFIW…VLIY), 110 to 130 (GISG…AIIF), and 136 to 156 (QSFW…YVFG). Arg-157 is an a 1,2-diacyl-sn-glycero-3-phospho-(1'-sn-glycerol) binding site. A run of 3 helical transmembrane segments spans residues 192–212 (SQLF…ICLL), 219–239 (GTLL…CEYF), and 256–276 (GQIL…FVFV).

This sequence belongs to the Lgt family.

Its subcellular location is the cell inner membrane. The catalysed reaction is L-cysteinyl-[prolipoprotein] + a 1,2-diacyl-sn-glycero-3-phospho-(1'-sn-glycerol) = an S-1,2-diacyl-sn-glyceryl-L-cysteinyl-[prolipoprotein] + sn-glycerol 1-phosphate + H(+). Its pathway is protein modification; lipoprotein biosynthesis (diacylglyceryl transfer). In terms of biological role, catalyzes the transfer of the diacylglyceryl group from phosphatidylglycerol to the sulfhydryl group of the N-terminal cysteine of a prolipoprotein, the first step in the formation of mature lipoproteins. This chain is Phosphatidylglycerol--prolipoprotein diacylglyceryl transferase, found in Helicobacter hepaticus (strain ATCC 51449 / 3B1).